A 375-amino-acid polypeptide reads, in one-letter code: Putative F-box protein At1g12190 (375 aa).

One can recognise an F-box domain in the interval 1 to 46 (MACVKFPWELMEEILYRVPSLSLSRFKTVSKEWNTLLNDKTFIKKH).

This Arabidopsis thaliana (Mouse-ear cress) protein is Putative F-box protein At1g12190.